We begin with the raw amino-acid sequence, 120 residues long: Ribonuclease P protein component (120 aa).

This sequence belongs to the RnpA family. Consists of a catalytic RNA component (M1 or rnpB) and a protein subunit.

The enzyme catalyses Endonucleolytic cleavage of RNA, removing 5'-extranucleotides from tRNA precursor.. In terms of biological role, RNaseP catalyzes the removal of the 5'-leader sequence from pre-tRNA to produce the mature 5'-terminus. It can also cleave other RNA substrates such as 4.5S RNA. The protein component plays an auxiliary but essential role in vivo by binding to the 5'-leader sequence and broadening the substrate specificity of the ribozyme. This Dictyoglomus thermophilum (strain ATCC 35947 / DSM 3960 / H-6-12) protein is Ribonuclease P protein component.